Consider the following 427-residue polypeptide: Peptidase B (427 aa).

Positions 195 and 200 each coordinate Mn(2+). Lysine 207 is a catalytic residue. Residues aspartate 218, aspartate 277, and glutamate 279 each contribute to the Mn(2+) site. Residue arginine 281 is part of the active site.

This sequence belongs to the peptidase M17 family. As to quaternary structure, homohexamer. Mn(2+) is required as a cofactor.

It is found in the cytoplasm. It catalyses the reaction Release of an N-terminal amino acid, Xaa, from a peptide or arylamide. Xaa is preferably Glu or Asp but may be other amino acids, including Leu, Met, His, Cys and Gln.. Its function is as follows. Probably plays an important role in intracellular peptide degradation. The protein is Peptidase B of Salmonella choleraesuis (strain SC-B67).